Here is a 929-residue protein sequence, read N- to C-terminus: Thrombospondin-3b (929 aa).

The N-terminal stretch at 1 to 22 (MELRKIVPNLLVLYVAVHFSQS) is a signal peptide. A Laminin G-like domain is found at 24–192 (EIKVINVLEL…VESVKLALGG (169 aa)). Asparagine 45 carries N-linked (GlcNAc...) asparagine glycosylation. Intrachain disulfides connect cysteine 277–cysteine 288, cysteine 282–cysteine 299, cysteine 319–cysteine 343, cysteine 349–cysteine 362, cysteine 356–cysteine 371, cysteine 374–cysteine 386, cysteine 392–cysteine 406, cysteine 400–cysteine 416, cysteine 418–cysteine 429, cysteine 445–cysteine 452, cysteine 457–cysteine 477, cysteine 493–cysteine 513, cysteine 516–cysteine 536, cysteine 552–cysteine 572, cysteine 575–cysteine 595, cysteine 613–cysteine 633, cysteine 653–cysteine 673, and cysteine 689–cysteine 910. One can recognise an EGF-like 1; calcium-binding domain in the interval 345–384 (DIDECAELSGSCVPNSVCINTVGSFKCGQCKAGFVGNQTV). Asparagine 381 carries an N-linked (GlcNAc...) asparagine glycan. Positions 388–430 (ARRTCETLGYSPCDVNSHCVMGRNSDVSCVCNVGWAGNGNICG) constitute an EGF-like 2 domain. TSP type-3 repeat units follow at residues 431-465 (PDSD…NSGQ), 466-501 (EDTD…NKDQ), 502-524 (QNSD…NGDQ), 525-560 (LDTD…NPMQ), 561-583 (TDRD…DPLQ), 584-621 (SDMD…NSSQ), 622-661 (LDSD…NPSQ), and 662-697 (IDTD…EVTM). A compositionally biased stretch (basic and acidic residues) spans 602–613 (DGDGYQDTRDNC). Residues 602-651 (DGDGYQDTRDNCPEVPNSSQLDSDNDGIGDECDDDDDNDGIPDILPPGPD) are disordered. Residue asparagine 618 is glycosylated (N-linked (GlcNAc...) asparagine). A compositionally biased stretch (acidic residues) spans 624-641 (SDNDGIGDECDDDDDNDG). The TSP C-terminal domain maps to 701–915 (RAFQTVILDP…LGYRCNDSIP (215 aa)). An N-linked (GlcNAc...) asparagine glycan is attached at asparagine 911.

The protein belongs to the thrombospondin family. As to quaternary structure, oligomer; disulfide-linked.

Functionally, adhesive glycoprotein that mediates cell-to-cell and cell-to-matrix interactions. Can bind to fibrinogen, fibronectin, laminin and type V collagen. The polypeptide is Thrombospondin-3b (Danio rerio (Zebrafish)).